A 107-amino-acid polypeptide reads, in one-letter code: Iron-sulfur cluster assembly protein CyaY (107 aa).

The protein belongs to the frataxin family.

Its function is as follows. Involved in iron-sulfur (Fe-S) cluster assembly. May act as a regulator of Fe-S biogenesis. The chain is Iron-sulfur cluster assembly protein CyaY from Thioalkalivibrio sulfidiphilus (strain HL-EbGR7).